Consider the following 178-residue polypeptide: Adenine phosphoribosyltransferase (178 aa).

Belongs to the purine/pyrimidine phosphoribosyltransferase family. As to quaternary structure, homodimer.

The protein resides in the cytoplasm. The catalysed reaction is AMP + diphosphate = 5-phospho-alpha-D-ribose 1-diphosphate + adenine. It functions in the pathway purine metabolism; AMP biosynthesis via salvage pathway; AMP from adenine: step 1/1. Catalyzes a salvage reaction resulting in the formation of AMP, that is energically less costly than de novo synthesis. The protein is Adenine phosphoribosyltransferase of Bacteroides fragilis (strain YCH46).